The chain runs to 244 residues: RAD51-like protein 1 (244 aa).

As to quaternary structure, interacts with brc-2 and rad-51.

It is found in the nucleus. In terms of biological role, has a role in the homologous recombination repair (HRR) of genomic DNA during meiosis. Required for rad-51 recruitment onto ssDNA gaps generated at stalled replication fork barriers. The sequence is that of RAD51-like protein 1 from Caenorhabditis briggsae.